A 1008-amino-acid polypeptide reads, in one-letter code: G protein-regulated inducer of neurite outgrowth 1 (1008 aa).

The tract at residues 1 to 859 is disordered; sequence MDTAEDPAWL…SPPSRRDAGL (859 aa). Residue Thr-60 is modified to Phosphothreonine. Phosphoserine occurs at positions 64 and 75. Residues 117-127 are compositionally biased toward polar residues; that stretch reads ISGTPEATTSG. Composition is skewed to basic and acidic residues over residues 137-159, 167-178, 230-269, and 279-291; these read TEPKSSDDRNPMFLEKMDFKSSK, GKEDPGSSRKAD, PRKEDPGSLRKVDPVSSDKVDPVFPRKEEPRYSGKEHPVS, and EKVDLVLSGKRDP. The residue at position 237 (Ser-237) is a Phosphoserine. Polar residues-rich tracts occupy residues 326–336 and 391–406; these read SGKNGPVSSGT and HTDTTASAKTDLTSLK. Phosphoserine occurs at positions 436 and 452. The segment covering 454-466 has biased composition (basic and acidic residues); sequence GKEDPVSSRREDP. Polar residues predominate over residues 481-491; the sequence is PESSGKTNPVS. Residues 549-559 show a composition bias toward basic and acidic residues; it reads GKEDPVSKGKA. At Ser-615 the chain carries Phosphoserine. Positions 643 to 656 are enriched in low complexity; it reads PGQEGAAAPGEAGA. A compositionally biased stretch (basic and acidic residues) spans 659 to 679; it reads LKKETPQASEKVDPGSCRKAE. Ser-737 bears the Phosphoserine mark. Residues 742–752 are compositionally biased toward basic and acidic residues; sequence RGSEGRVEPKA. Over residues 755-764 the composition is skewed to polar residues; the sequence is VSSTEASSLG. A Phosphoserine modification is found at Ser-799. Residues 838-847 show a composition bias toward low complexity; sequence SAFSFQAAPR. A Phosphothreonine modification is found at Thr-877. Phosphoserine occurs at positions 895 and 914. Residues 899 to 1008 are interaction with GNAO1; it reads AAVAPPEPAE…CCSRAGPTAE (110 aa). The interval 943 to 986 is disordered; that stretch reads ERQIEEHGRQGAPAPPPAARAGPGRSGSVRTAPPDGAAKRPPGL. Ser-993 is subject to Phosphoserine. Residues Cys-999 and Cys-1000 are each lipidated (S-palmitoyl cysteine).

Interacts with activated forms of GNAI1, GNAO1 and GNAZ. Post-translationally, palmitoylation on Cys-999 and/or Cys-1000 is required for membrane targeting. In terms of tissue distribution, widely expressed in the central nervous system, with highest levels in spinal cord.

It is found in the cell membrane. It localises to the cell projection. Its subcellular location is the growth cone. Functionally, may be involved in neurite outgrowth. The sequence is that of G protein-regulated inducer of neurite outgrowth 1 (GPRIN1) from Homo sapiens (Human).